The sequence spans 99 residues: Aspartyl/glutamyl-tRNA(Asn/Gln) amidotransferase subunit C (99 aa).

This sequence belongs to the GatC family. In terms of assembly, heterotrimer of A, B and C subunits.

The catalysed reaction is L-glutamyl-tRNA(Gln) + L-glutamine + ATP + H2O = L-glutaminyl-tRNA(Gln) + L-glutamate + ADP + phosphate + H(+). It carries out the reaction L-aspartyl-tRNA(Asn) + L-glutamine + ATP + H2O = L-asparaginyl-tRNA(Asn) + L-glutamate + ADP + phosphate + 2 H(+). Allows the formation of correctly charged Asn-tRNA(Asn) or Gln-tRNA(Gln) through the transamidation of misacylated Asp-tRNA(Asn) or Glu-tRNA(Gln) in organisms which lack either or both of asparaginyl-tRNA or glutaminyl-tRNA synthetases. The reaction takes place in the presence of glutamine and ATP through an activated phospho-Asp-tRNA(Asn) or phospho-Glu-tRNA(Gln). The sequence is that of Aspartyl/glutamyl-tRNA(Asn/Gln) amidotransferase subunit C from Mycolicibacterium vanbaalenii (strain DSM 7251 / JCM 13017 / BCRC 16820 / KCTC 9966 / NRRL B-24157 / PYR-1) (Mycobacterium vanbaalenii).